The following is a 185-amino-acid chain: Elongation factor P (185 aa).

Belongs to the elongation factor P family.

It localises to the cytoplasm. It participates in protein biosynthesis; polypeptide chain elongation. Functionally, involved in peptide bond synthesis. Stimulates efficient translation and peptide-bond synthesis on native or reconstituted 70S ribosomes in vitro. Probably functions indirectly by altering the affinity of the ribosome for aminoacyl-tRNA, thus increasing their reactivity as acceptors for peptidyl transferase. The polypeptide is Elongation factor P (Caldicellulosiruptor bescii (strain ATCC BAA-1888 / DSM 6725 / KCTC 15123 / Z-1320) (Anaerocellum thermophilum)).